The primary structure comprises 280 residues: Chaperone for lacto-N-biosidase (280 aa).

An N-terminal signal peptide occupies residues 1-37; the sequence is MPRRHRFAAAIAAVAVAAVLLVTLTVAVVTHGDGAFA.

In terms of assembly, homodimer.

The protein localises to the secreted. Chaperone required for active expression of the lacto-N-biosidase LnbX. This chain is Chaperone for lacto-N-biosidase, found in Bifidobacterium longum subsp. longum (strain ATCC 15707 / DSM 20219 / JCM 1217 / NCTC 11818 / E194b).